The sequence spans 391 residues: Large ribosomal subunit protein uL3 (391 aa).

The segment covering 1-10 (MSHRKFEAPR) has biased composition (basic and acidic residues). Residues 1-41 (MSHRKFEAPRHGSLGFRPRRRTRHHRGRCRSFPKDDPSKKP) are disordered. The segment covering 17–31 (RPRRRTRHHRGRCRS) has biased composition (basic residues).

The protein belongs to the universal ribosomal protein uL3 family.

Its subcellular location is the cytoplasm. The L3 protein is a component of the large subunit of cytoplasmic ribosomes. The sequence is that of Large ribosomal subunit protein uL3 (RPL3) from Tetrahymena thermophila.